A 338-amino-acid polypeptide reads, in one-letter code: Mitochondrial E3 ubiquitin protein ligase 1 (338 aa).

The Cytoplasmic portion of the chain corresponds to 1–3 (MEF). A helical transmembrane segment spans residues 4 to 24 (LHESVALGVDLLILGLCAREY). Residues 25–227 (VHYKRTAKVL…LIKRFEDAKT (203 aa)) are Mitochondrial intermembrane-facing. Residues 228–248 (TTILKLVVCSTISAILVAFIA) traverse the membrane as a helical segment. Topologically, residues 249–338 (KKLYRKRKQE…IVSKAAAFIA (90 aa)) are cytoplasmic. Residues 290–326 (CVVCSTNPKEIILLPCGHVCLCEDCAQKISVTCPVCR) form an RING-type zinc finger.

As to quaternary structure, interacts with Marf. Post-translationally, auto-ubiquitinated.

Its subcellular location is the mitochondrion outer membrane. It carries out the reaction S-ubiquitinyl-[E2 ubiquitin-conjugating enzyme]-L-cysteine + [acceptor protein]-L-lysine = [E2 ubiquitin-conjugating enzyme]-L-cysteine + N(6)-ubiquitinyl-[acceptor protein]-L-lysine.. Functionally, exhibits weak E3 ubiquitin-protein ligase activity. E3 ubiquitin ligases accept ubiquitin from an E2 ubiquitin-conjugating enzyme in the form of a thioester and then directly transfer the ubiquitin to targeted substrates. Plays a role in the control of mitochondrial morphology by promoting mitochondrial fission. Negatively regulates the mitochondrial fusion protein marf by promoting its ubiquitination, acting in a pathway that is parallel to the park/pink1 regulatory pathway. The protein is Mitochondrial E3 ubiquitin protein ligase 1 of Drosophila melanogaster (Fruit fly).